The sequence spans 172 residues: Single-stranded DNA-binding protein A (172 aa).

The region spanning 1-104 is the SSB domain; that stretch reads MLNRVVLVGR…VQAESVQFLE (104 aa). Tyr82 is modified (phosphotyrosine). The interval 103–172 is disordered; sequence LEPKNGGGSG…IDISDDDLPF (70 aa). The span at 107–131 shows a compositional bias: gly residues; that stretch reads NGGGSGSGGYNEGNSGGGQYFGGGQ. Over residues 132–149 the composition is skewed to low complexity; it reads NDNPFGGNQNNQRRNQGN. The Important for interaction with partner proteins motif lies at 167–172; sequence DDDLPF.

As to quaternary structure, homotetramer. Interacts with proteins involved in DNA metabolism such as PriA, RecQ, RecG, RecS, DnaE, RarA, RecJ, RecO, SbcC, RecD2 (formerly YrrC), XseA and Ung. Interacts with RecQ via its 10 C-terminal residues. Interacts with RecD2. In terms of processing, phosphorylated by YwqD, which increases ssDNA affinity; dephosphorylated by YwqE.

The protein localises to the cytoplasm. The protein resides in the nucleoid. Its function is as follows. Plays an important role in DNA replication, recombination and repair. Binds to single-stranded (ss)DNA and to an array of partner proteins to recruit them to their sites of action during DNA metabolism. Associates with oriC, this requires DnaA. SsbA binding to ssDNA prevents DnaB and DnaD individually from binding to DNA. Has a 20-fold higher affinity for ssDNA than SsbB; SsbA and DprA activate the homologous DNA strand exchange function of RecA-ATP. Enhances the activity of 3'-5' DNA helicase RecQ. In Bacillus subtilis (strain 168), this protein is Single-stranded DNA-binding protein A (ssbA).